Consider the following 404-residue polypeptide: Formate-dependent phosphoribosylglycinamide formyltransferase (404 aa).

N(1)-(5-phospho-beta-D-ribosyl)glycinamide-binding positions include 25–26 (EL) and E85. Residues R118, K159, 164-169 (SSGKGQ), 199-202 (EGFI), and E207 each bind ATP. Positions 123–318 (RLAAEELGLA…EFELHARAIL (196 aa)) constitute an ATP-grasp domain. Mg(2+) contacts are provided by E277 and E289. N(1)-(5-phospho-beta-D-ribosyl)glycinamide contacts are provided by residues D296, K365, and 372-373 (RR).

The protein belongs to the PurK/PurT family. In terms of assembly, homodimer.

It carries out the reaction N(1)-(5-phospho-beta-D-ribosyl)glycinamide + formate + ATP = N(2)-formyl-N(1)-(5-phospho-beta-D-ribosyl)glycinamide + ADP + phosphate + H(+). It participates in purine metabolism; IMP biosynthesis via de novo pathway; N(2)-formyl-N(1)-(5-phospho-D-ribosyl)glycinamide from N(1)-(5-phospho-D-ribosyl)glycinamide (formate route): step 1/1. Its function is as follows. Involved in the de novo purine biosynthesis. Catalyzes the transfer of formate to 5-phospho-ribosyl-glycinamide (GAR), producing 5-phospho-ribosyl-N-formylglycinamide (FGAR). Formate is provided by PurU via hydrolysis of 10-formyl-tetrahydrofolate. This is Formate-dependent phosphoribosylglycinamide formyltransferase from Burkholderia vietnamiensis (strain G4 / LMG 22486) (Burkholderia cepacia (strain R1808)).